A 284-amino-acid polypeptide reads, in one-letter code: 2,3,4,5-tetrahydropyridine-2,6-dicarboxylate N-succinyltransferase (284 aa).

Residues arginine 111 and aspartate 148 each coordinate substrate.

Belongs to the transferase hexapeptide repeat family. In terms of assembly, homotrimer.

The protein localises to the cytoplasm. The enzyme catalyses (S)-2,3,4,5-tetrahydrodipicolinate + succinyl-CoA + H2O = (S)-2-succinylamino-6-oxoheptanedioate + CoA. It participates in amino-acid biosynthesis; L-lysine biosynthesis via DAP pathway; LL-2,6-diaminopimelate from (S)-tetrahydrodipicolinate (succinylase route): step 1/3. This is 2,3,4,5-tetrahydropyridine-2,6-dicarboxylate N-succinyltransferase from Brucella melitensis biotype 2 (strain ATCC 23457).